The chain runs to 213 residues: Hemolysin-3 homolog (213 aa).

Transmembrane regions (helical) follow at residues 11 to 31 (AITH…LIIF), 41 to 61 (IVSF…STLL), 75 to 95 (IIDH…FLLG), 103 to 123 (FTLL…KIFF), 127 to 147 (FILL…IAVK), 157 to 177 (GFSL…FYIW), and 185 to 205 (AIWH…VLFY).

Belongs to the UPF0073 (Hly-III) family.

It is found in the cell membrane. This Bacillus subtilis (strain 168) protein is Hemolysin-3 homolog (yplQ).